The primary structure comprises 360 residues: DNA polymerase IV (360 aa).

Residues 8–189 (IIHVDMDCFF…LPLEKIPGVG (182 aa)) form the UmuC domain. Mg(2+) is bound by residues aspartate 12 and aspartate 107. The active site involves glutamate 108.

The protein belongs to the DNA polymerase type-Y family. As to quaternary structure, monomer. Requires Mg(2+) as cofactor.

It is found in the cytoplasm. The enzyme catalyses DNA(n) + a 2'-deoxyribonucleoside 5'-triphosphate = DNA(n+1) + diphosphate. In terms of biological role, poorly processive, error-prone DNA polymerase involved in untargeted mutagenesis. Copies undamaged DNA at stalled replication forks, which arise in vivo from mismatched or misaligned primer ends. These misaligned primers can be extended by PolIV. Exhibits no 3'-5' exonuclease (proofreading) activity. May be involved in translesional synthesis, in conjunction with the beta clamp from PolIII. This Vibrio cholerae serotype O1 (strain ATCC 39541 / Classical Ogawa 395 / O395) protein is DNA polymerase IV.